The primary structure comprises 965 residues: Chondroitin synthase (965 aa).

The segment at 132 to 418 (FTWYKNRKKS…IVKEKVPYIY (287 aa)) is galactosaminyltransferase; A1 domain. Residues Pro-158, Arg-162, Asp-189, Tyr-218, Arg-224, and 240 to 241 (DC) contribute to the UDP-N-acetyl-alpha-D-galactosamine site. Asp-242 contacts Mn(2+). Residue 362-363 (ED) participates in UDP-N-acetyl-alpha-D-galactosamine binding. His-387 contributes to the Mn(2+) binding site. The glucuronosyltransferase; A2 domain stretch occupies residues 419–683 (RKLLPIEDSH…ESRKYIFNKT (265 aa)). UDP-alpha-D-glucuronate is bound by residues Tyr-442, Asp-470, and 518 to 521 (QLDS). Asp-522 is a Mn(2+) binding site. Residues His-582 and 604 to 605 (AV) contribute to the UDP-alpha-D-glucuronate site. Position 632 (His-632) interacts with Mn(2+).

It belongs to the glycosyltransferase 2 family. CS/HAS subfamily. It depends on Mn(2+) as a cofactor.

Its subcellular location is the cell membrane. The catalysed reaction is 3-O-(beta-D-GlcA-(1-&gt;3)-beta-D-GalNAc-(1-&gt;4)-beta-D-GlcA-(1-&gt;3)-beta-D-Gal-(1-&gt;3)-beta-D-Gal-(1-&gt;4)-beta-D-Xyl)-L-seryl-[protein] + UDP-N-acetyl-alpha-D-galactosamine = 3-O-(beta-D-GalNAc-(1-&gt;4)-beta-D-GlcA-(1-&gt;3)-beta-D-GalNAc-(1-&gt;4)-beta-D-GlcA-(1-&gt;3)-beta-D-Gal-(1-&gt;3)-beta-D-Gal-(1-&gt;4)-beta-D-Xyl)-L-seryl-[protein] + UDP + H(+). It catalyses the reaction 3-O-{beta-D-GlcA-(1-&gt;3)-[beta-D-GalNAc-(1-&gt;4)-beta-D-GlcA-(1-&gt;3)](n)-beta-D-GalNAc-(1-&gt;4)-beta-D-GlcA-(1-&gt;3)-beta-D-Gal-(1-&gt;3)-beta-D-Gal-(1-&gt;4)-beta-D-Xyl}-L-seryl-[protein] + UDP-N-acetyl-alpha-D-galactosamine = 3-O-{[beta-D-GalNAc-(1-&gt;4)-beta-D-GlcA-(1-&gt;3)](n+1)-beta-D-GalNAc-(1-&gt;4)-beta-D-GlcA-(1-&gt;3)-beta-D-Gal-(1-&gt;3)-beta-D-Gal-(1-&gt;4)-beta-D-Xyl}-L-seryl-[protein] + UDP + H(+). The enzyme catalyses 3-O-(beta-D-GalNAc-(1-&gt;4)-beta-D-GlcA-(1-&gt;3)-beta-D-Gal-(1-&gt;3)-beta-D-Gal-(1-&gt;4)-beta-D-Xyl)-L-seryl-[protein] + UDP-alpha-D-glucuronate = 3-O-(beta-D-GlcA-(1-&gt;3)-beta-D-GalNAc-(1-&gt;4)-beta-D-GlcA-(1-&gt;3)-beta-D-Gal-(1-&gt;3)-beta-D-Gal-(1-&gt;4)-beta-D-Xyl)-L-seryl-[protein] + UDP + H(+). It carries out the reaction 3-O-{[beta-D-GalNAc-(1-&gt;4)-beta-D-GlcA-(1-&gt;3)](n)-beta-D-GalNAc-(1-&gt;4)-beta-D-GlcA-(1-&gt;3)-beta-D-Gal-(1-&gt;3)-beta-D-Gal-(1-&gt;4)-beta-D-Xyl}-L-seryl-[protein] + UDP-alpha-D-glucuronate = 3-O-{beta-D-GlcA-(1-&gt;3)-[beta-D-GalNAc-(1-&gt;4)-beta-D-GlcA-(1-&gt;3)](n)-beta-D-GalNAc-(1-&gt;4)-beta-D-GlcA-(1-&gt;3)-beta-D-Gal-(1-&gt;3)-beta-D-Gal-(1-&gt;4)-beta-D-Xyl}-L-seryl-[protein] + UDP + H(+). In terms of biological role, glycosyltransferase that catalyzes elongation of chondroitin, a polysaccharide composed of a repeating disaccharide of N-acetylgalactosamine (GalNAc) and glucuronic acid (GlcUA) units, by alternatively transferring the GlcUA and GalNAc moiety from UDP-GlcUA and UDP-GalNAc to the non-reducing ends of the chondroitin chain. Each chondroitin unit has the composition beta-(1-&gt;4)-GlcUA-beta-(1-&gt;3)-GalNAc. The sequence is that of Chondroitin synthase (fcbD) from Pasteurella multocida (strain Pm70).